Reading from the N-terminus, the 337-residue chain is Tryptophan--tRNA ligase (337 aa).

ATP is bound by residues 11–13 and 19–20; these read QPT and GN. Positions 12-20 match the 'HIGH' region motif; the sequence is PTGALHLGN. Asp135 serves as a coordination point for L-tryptophan. Residues 147-149, Val191, and 200-204 each bind ATP; these read GED and KMSKS. The 'KMSKS' region signature appears at 200–204; the sequence is KMSKS.

It belongs to the class-I aminoacyl-tRNA synthetase family. As to quaternary structure, homodimer.

The protein resides in the cytoplasm. It catalyses the reaction tRNA(Trp) + L-tryptophan + ATP = L-tryptophyl-tRNA(Trp) + AMP + diphosphate + H(+). Catalyzes the attachment of tryptophan to tRNA(Trp). The chain is Tryptophan--tRNA ligase from Parasynechococcus marenigrum (strain WH8102).